We begin with the raw amino-acid sequence, 317 residues long: Beta-ketoacyl-[acyl-carrier-protein] synthase III (317 aa).

Catalysis depends on residues Cys-112 and His-244. Residues 245-249 form an ACP-binding region; it reads QANLR. Residue Asn-274 is part of the active site.

It belongs to the thiolase-like superfamily. FabH family. Homodimer.

The protein localises to the cytoplasm. The enzyme catalyses malonyl-[ACP] + acetyl-CoA + H(+) = 3-oxobutanoyl-[ACP] + CO2 + CoA. Its pathway is lipid metabolism; fatty acid biosynthesis. In terms of biological role, catalyzes the condensation reaction of fatty acid synthesis by the addition to an acyl acceptor of two carbons from malonyl-ACP. Catalyzes the first condensation reaction which initiates fatty acid synthesis and may therefore play a role in governing the total rate of fatty acid production. Possesses both acetoacetyl-ACP synthase and acetyl transacylase activities. Its substrate specificity determines the biosynthesis of branched-chain and/or straight-chain of fatty acids. In Aliivibrio fischeri (strain ATCC 700601 / ES114) (Vibrio fischeri), this protein is Beta-ketoacyl-[acyl-carrier-protein] synthase III.